The following is a 211-amino-acid chain: Dephospho-CoA kinase (211 aa).

Positions valine 3 to alanine 206 constitute a DPCK domain. An ATP-binding site is contributed by alanine 11–threonine 16.

Belongs to the CoaE family.

The protein localises to the cytoplasm. It carries out the reaction 3'-dephospho-CoA + ATP = ADP + CoA + H(+). Its pathway is cofactor biosynthesis; coenzyme A biosynthesis; CoA from (R)-pantothenate: step 5/5. Functionally, catalyzes the phosphorylation of the 3'-hydroxyl group of dephosphocoenzyme A to form coenzyme A. In Anaeromyxobacter dehalogenans (strain 2CP-C), this protein is Dephospho-CoA kinase.